The primary structure comprises 318 residues: Porphobilinogen deaminase (318 aa).

Position 241 is an S-(dipyrrolylmethanemethyl)cysteine (cysteine 241).

Belongs to the HMBS family. Monomer. The cofactor is dipyrromethane.

The enzyme catalyses 4 porphobilinogen + H2O = hydroxymethylbilane + 4 NH4(+). Its pathway is porphyrin-containing compound metabolism; protoporphyrin-IX biosynthesis; coproporphyrinogen-III from 5-aminolevulinate: step 2/4. Functionally, tetrapolymerization of the monopyrrole PBG into the hydroxymethylbilane pre-uroporphyrinogen in several discrete steps. The sequence is that of Porphobilinogen deaminase from Citrifermentans bemidjiense (strain ATCC BAA-1014 / DSM 16622 / JCM 12645 / Bem) (Geobacter bemidjiensis).